Here is an 822-residue protein sequence, read N- to C-terminus: Dextranase (822 aa).

A signal peptide spans 1-38 (MTVNLTLQHASEIIGQDNVDLTLAAGASAKVSNLTVAS). 2 disordered regions span residues 607–669 (EPVT…VDEL) and 683–788 (ETAH…ETTS). A compositionally biased stretch (low complexity) spans 619-636 (NTVTSEASSETAKSENTT). Polar residues predominate over residues 693-705 (SVSNTDQGTVASD). The span at 706-761 (SITTPASEAASTAASTVSSEVSESVTVSSEPSETENSSEASTSESATPTTTAISES) shows a compositional bias: low complexity. Positions 771-788 (LTESESQASTSLVSETTS) are enriched in polar residues.

The protein belongs to the glycosyl hydrolase 66 family.

The catalysed reaction is Endohydrolysis of (1-&gt;6)-alpha-D-glucosidic linkages in dextran.. This is Dextranase (dex) from Streptococcus salivarius.